The following is a 282-amino-acid chain: MADRVRKPEWLKINIGANDRYTETKRIVDSHCLHTICSSGRCPNMGECWGKGTATFMIGGDICTRSCKFCNTQTGRPHPLDANEPTHVAESIALMKLDHAVVTSVDRDDLPDLGAGHWAHTIREIKRLNPQTTIEVLIPDFQGRMELVDLVIEANPDIISHNMETVRRISPLVRSAANYDTSLQVIGHIARSGTKSKSGIMVGLGETPQEVETIMDDLLAVGCQILTIGQYLQPTHRHYPVAEYVTPQQFATYKTIGLEKGFSIVESAPLVRSSYHAEKHIR.

Cys37, Cys42, Cys48, Cys63, Cys67, Cys70, and Ser274 together coordinate [4Fe-4S] cluster. Residues 49-263 form the Radical SAM core domain; that stretch reads WGKGTATFMI…KTIGLEKGFS (215 aa).

This sequence belongs to the radical SAM superfamily. Lipoyl synthase family. Requires [4Fe-4S] cluster as cofactor.

The protein resides in the cytoplasm. It carries out the reaction [[Fe-S] cluster scaffold protein carrying a second [4Fe-4S](2+) cluster] + N(6)-octanoyl-L-lysyl-[protein] + 2 oxidized [2Fe-2S]-[ferredoxin] + 2 S-adenosyl-L-methionine + 4 H(+) = [[Fe-S] cluster scaffold protein] + N(6)-[(R)-dihydrolipoyl]-L-lysyl-[protein] + 4 Fe(3+) + 2 hydrogen sulfide + 2 5'-deoxyadenosine + 2 L-methionine + 2 reduced [2Fe-2S]-[ferredoxin]. Its pathway is protein modification; protein lipoylation via endogenous pathway; protein N(6)-(lipoyl)lysine from octanoyl-[acyl-carrier-protein]: step 2/2. Its function is as follows. Catalyzes the radical-mediated insertion of two sulfur atoms into the C-6 and C-8 positions of the octanoyl moiety bound to the lipoyl domains of lipoate-dependent enzymes, thereby converting the octanoylated domains into lipoylated derivatives. This is Lipoyl synthase from Bacteroides thetaiotaomicron (strain ATCC 29148 / DSM 2079 / JCM 5827 / CCUG 10774 / NCTC 10582 / VPI-5482 / E50).